Here is a 293-residue protein sequence, read N- to C-terminus: Protease HtpX homolog (293 aa).

2 consecutive transmembrane segments (helical) span residues 4 to 24 (IFLF…VLSL) and 39 to 59 (PMLL…SLLI). His144 serves as a coordination point for Zn(2+). The active site involves Glu145. Position 148 (His148) interacts with Zn(2+). Transmembrane regions (helical) follow at residues 159–179 (LVQG…GYFV) and 200–220 (ITVL…VAWF). Residue Glu225 participates in Zn(2+) binding.

Belongs to the peptidase M48B family. It depends on Zn(2+) as a cofactor.

It is found in the cell inner membrane. In Herminiimonas arsenicoxydans, this protein is Protease HtpX homolog.